Consider the following 326-residue polypeptide: MLTLARQQQRQNIRWLLCLSVLMLLALLLSLCAGEQWISLGDWFTPRGELFVWQIRLPRTLAVLLVGAALAISGAVMQALFENPLAEPGLLGVSNGAGVGLIAAVLLGQGQLPNWALGLCAIAGALIITLILLRFARRHLSTSRLLLAGVALGIICSALMTWAIYFSTSVDLRQLMYWMMGGFGGVDWRQSWLMLALIPVLLWICCQSRPMNMLALGEISARQLGLPLWFWRNVLVAATGWMVGVSVALAGAIGFIGLVIPHILRLCGLTDHRVLLPGCALAGASALLLADIVARLALAAAELPIGVVTATLGAPVFIWLLLKARR.

9 consecutive transmembrane segments (helical) span residues 15–35 (WLLC…CAGE), 61–81 (LAVL…QALF), 88–108 (PGLL…VLLG), 112–132 (LPNW…TLIL), 146–166 (LLAG…AIYF), 184–204 (GGVD…LLWI), 240–260 (GWMV…GLVI), 274–294 (VLLP…DIVA), and 302–322 (ELPI…WLLL).

It belongs to the binding-protein-dependent transport system permease family. FecCD subfamily. In terms of assembly, the complex is composed of two ATP-binding proteins (BtuD), two transmembrane proteins (BtuC) and a solute-binding protein (BtuF).

The protein resides in the cell inner membrane. Its function is as follows. Part of the ABC transporter complex BtuCDF involved in vitamin B12 import. Involved in the translocation of the substrate across the membrane. This chain is Vitamin B12 import system permease protein BtuC, found in Shigella boydii serotype 18 (strain CDC 3083-94 / BS512).